The sequence spans 344 residues: GDSL esterase/lipase At2g19010 (344 aa).

Residues 1–21 (MSKACWLVAAIIFTAATVVYG) form the signal peptide. Serine 33 functions as the Nucleophile in the catalytic mechanism. N-linked (GlcNAc...) asparagine glycosylation is present at asparagine 303. Catalysis depends on residues aspartate 311 and histidine 314.

This sequence belongs to the 'GDSL' lipolytic enzyme family.

The protein localises to the secreted. The protein is GDSL esterase/lipase At2g19010 of Arabidopsis thaliana (Mouse-ear cress).